An 831-amino-acid chain; its full sequence is Serine/threonine-protein kinase ATG1 (831 aa).

In terms of domain architecture, Protein kinase spans 21-321; that stretch reads YSVEKEIGKG…FTDFFNNEVV (301 aa). Residues 27-35 and K50 each bind ATP; that span reads IGKGSFAVV. D168 (proton acceptor) is an active-site residue. 2 stretches are compositionally biased toward polar residues: residues 360–382 and 405–419; these read QQES…TGVR and NSQN…ASQK. The disordered stretch occupies residues 360 to 419; sequence QQESAHIPPTQTDENTSVQTGVRRTSGKERLATNHPPHQQIHPEDNSQNPEQSYQSASQK.

This sequence belongs to the protein kinase superfamily. Ser/Thr protein kinase family. APG1/unc-51/ULK1 subfamily. Homodimer. Forms a ternary complex with ATG13 and ATG17.

Its subcellular location is the cytoplasm. The protein localises to the preautophagosomal structure membrane. It catalyses the reaction L-seryl-[protein] + ATP = O-phospho-L-seryl-[protein] + ADP + H(+). It carries out the reaction L-threonyl-[protein] + ATP = O-phospho-L-threonyl-[protein] + ADP + H(+). Its function is as follows. Serine/threonine protein kinase involved in the cytoplasm to vacuole transport (Cvt) and found to be essential in autophagy, where it is required for the formation of autophagosomes. Involved in the clearance of protein aggregates which cannot be efficiently cleared by the proteasome. Required for selective autophagic degradation of the nucleus (nucleophagy) as well as for mitophagy which contributes to regulate mitochondrial quantity and quality by eliminating the mitochondria to a basal level to fulfill cellular energy requirements and preventing excess ROS production. Also involved in endoplasmic reticulum-specific autophagic process, in selective removal of ER-associated degradation (ERAD) substrates. Plays a key role in ATG9 and ATG23 cycling through the pre-autophagosomal structure and is necessary to promote ATG18 binding to ATG9 through phosphorylation of ATG9. Catalyzes phosphorylation of ATG4, decreasing the interaction between ATG4 and ATG8 and impairing deconjugation of PE-conjugated forms of ATG8. The chain is Serine/threonine-protein kinase ATG1 from Kluyveromyces lactis (strain ATCC 8585 / CBS 2359 / DSM 70799 / NBRC 1267 / NRRL Y-1140 / WM37) (Yeast).